A 1796-amino-acid chain; its full sequence is Non-reducing polyketide synthase nscA (1796 aa).

The interval 18–256 (DDLKDLFRRL…PLPVYDGLCH (239 aa)) is N-terminal acylcarrier protein transacylase domain (SAT). Positions 392–825 (SSKLAIVGMA…GGNTTLLLED (434 aa)) constitute a Ketosynthase family 3 (KS3) domain. Catalysis depends on for beta-ketoacyl synthase activity residues Cys-565, His-700, and His-743. Positions 931–1251 (FTGQGAYYSG…SLVTLHLAGL (321 aa)) are malonyl-CoA:ACP transacylase (MAT) domain. The tract at residues 1317 to 1636 (TSLVHQITAE…RLLMDRFFSP (320 aa)) is product template (PT) domain. The N-terminal hotdog fold stretch occupies residues 1321-1457 (HQITAETVEA…ATVRFEDPVA (137 aa)). One can recognise a PKS/mFAS DH domain in the interval 1321–1631 (HQITAETVEA…FRRVPRLLMD (311 aa)). His-1353 acts as the Proton acceptor; for dehydratase activity in catalysis. Residues 1485–1631 (ASRLSKPLAY…FRRVPRLLMD (147 aa)) are C-terminal hotdog fold. Asp-1542 serves as the catalytic Proton donor; for dehydratase activity. Positions 1688–1720 (TPESTPPLAPSSESSTPKESPIATPPESERADP) are disordered. Residues 1697–1708 (PSSESSTPKESP) are compositionally biased toward low complexity. One can recognise a Carrier domain in the interval 1719–1796 (DPMDNMVSQC…EMTAWIEEYC (78 aa)). At Ser-1756 the chain carries O-(pantetheine 4'-phosphoryl)serine.

Requires pantetheine 4'-phosphate as cofactor.

Its pathway is secondary metabolite biosynthesis. In terms of biological role, non-reducing polyketide synthase; part of the gene cluster that mediates the biosynthesis of neosartoricin B, a prenylated anthracenone that probably exhibits T-cell antiproliferative activity, suggestive of a physiological role as an immunosuppressive agent. The non-reducing polyketide synthase nscA probably synthesizes and cyclizes the decaketide backbone. The hydrolase nscB then mediates the product release through hydrolysis followed by spontaneous decarboxylation. The prenyltransferase nscD catalyzes the addition of the dimethylallyl group to the aromatic C5. The FAD-dependent monooxygenase nscC is then responsible for the stereospecific hydroxylation at C2. Neosartoricin B can be converted into two additional compounds neosartoricins C and D. Neosartoricin C is a spirocyclic compound that is cyclized through the attack of C3 hydroxyl on C14, followed by dehydration. On the other hand, neosartoricin D is a further cyclized compound in which attack of C2 on C14 in neosartoricin C results in the formation of the acetal-containing dioxabicyclo-octanone ring. Both of these compounds are novel and possibly represent related metabolites of the gene cluster. The chain is Non-reducing polyketide synthase nscA from Arthroderma otae (strain ATCC MYA-4605 / CBS 113480) (Microsporum canis).